The chain runs to 66 residues: Cold shock-like protein (66 aa).

Residues 3 to 62 (GKVKWFDSKKGYGFITKDEGGDVFVHWSAIEMEGFKTLKEGQVVEFEIQEGKKGPQAAHV) enclose the CSD domain.

Monomer.

It is found in the cytoplasm. The protein is Cold shock-like protein (csp) of Thermotoga maritima (strain ATCC 43589 / DSM 3109 / JCM 10099 / NBRC 100826 / MSB8).